We begin with the raw amino-acid sequence, 234 residues long: Glucosamine-6-phosphate deaminase (234 aa).

Residue Asp-63 is the Proton acceptor; for enolization step of the active site. Catalysis depends on Asn-129, which acts as the For ring-opening step. The Proton acceptor; for ring-opening step role is filled by His-131. The For ring-opening step role is filled by Glu-136.

It belongs to the glucosamine/galactosamine-6-phosphate isomerase family. NagB subfamily.

It carries out the reaction alpha-D-glucosamine 6-phosphate + H2O = beta-D-fructose 6-phosphate + NH4(+). It participates in amino-sugar metabolism; N-acetylneuraminate degradation; D-fructose 6-phosphate from N-acetylneuraminate: step 5/5. Functionally, catalyzes the reversible isomerization-deamination of glucosamine 6-phosphate (GlcN6P) to form fructose 6-phosphate (Fru6P) and ammonium ion. The chain is Glucosamine-6-phosphate deaminase from Listeria monocytogenes serotype 4b (strain CLIP80459).